A 218-amino-acid polypeptide reads, in one-letter code: UPF0177 protein YaiF (218 aa).

The next 5 helical transmembrane spans lie at 8-28 (SIII…AVFL), 48-68 (FIIL…KCGF), 81-101 (ILLI…VVQF), 123-143 (ILSS…APIL), and 163-183 (FFLS…DILG).

The protein belongs to the UPF0177 family.

The protein localises to the cell membrane. This is UPF0177 protein YaiF (yaiF) from Lactococcus lactis subsp. lactis (strain IL1403) (Streptococcus lactis).